The sequence spans 639 residues: Probable potassium transport system protein Kup 1 (639 aa).

A compositionally biased stretch (polar residues) spans 1-16 (MALANTGSEAEPVEQS). A disordered region spans residues 1–21 (MALANTGSEAEPVEQSSHPEI). Transmembrane regions (helical) follow at residues 29–49 (LMLG…IYAF), 67–87 (ILGV…IKYI), 117–137 (AVIL…AVIT), 154–174 (PTFQ…VFAV), 182–202 (VGLV…LSGL), 220–240 (IVAF…AIFL), 260–280 (IVLA…AGQG), 302–322 (ALIP…QAVI), 354–374 (IYMP…VVGF), 383–403 (AYGI…YVVM), 411–431 (LWVA…FFAS), and 436–456 (VFEG…GMWT).

The protein belongs to the HAK/KUP transporter (TC 2.A.72) family.

It localises to the cell inner membrane. It carries out the reaction K(+)(in) + H(+)(in) = K(+)(out) + H(+)(out). In terms of biological role, transport of potassium into the cell. Likely operates as a K(+):H(+) symporter. This Mesorhizobium japonicum (strain LMG 29417 / CECT 9101 / MAFF 303099) (Mesorhizobium loti (strain MAFF 303099)) protein is Probable potassium transport system protein Kup 1.